Here is a 528-residue protein sequence, read N- to C-terminus: MNFDKEKCDEWEKIRLNSSPKNPFTKRNVKKDGPTYKKIDLICKHNVVGGNVVDLNKLCLKWLKDNHPNVKIPKSKSPPKVKSPKRKKSPVRRRVSSPLLTDDEDDVLNLQYDYLLSYRSVASEEITNYLRQTINDKTITAGNACMSNTKTLLKYFTNVKAVGKGSFGTVYIGNINIKNNVFSIAIKEGQISGLEANRAKKLQFPVEYLFNQMMNNILNNKMCPSFNYTYCIHFCDHCEVVSAIFKNPKTKSKITTCSVTMVEKADSDLIGLTSLDAQLSALFQILAAVHCIHKLYGIQHCDIKIENVLKKNIPKQANEYFRYSLDGVNYFVPNTGFVAILNDFGVSFSTSPKISTSYFGVRNAKVVFNNNSYKFQSFTTQRYPQENKWGKIETLSPPPRLRGPGGAKLTLNKFMKNFDSKPSIFVDLEDFQKFPTFGMYQDIQDVVRMFVGGKQTVQPGSHTEMRGLQPQAKKAILPFVEKLAPTSIWPEDKVELFLANVLIHKIFTQFGYTNAPPNAIILETYKLP.

Residues 70-96 are disordered; sequence VKIPKSKSPPKVKSPKRKKSPVRRRVS. The span at 73–95 shows a compositional bias: basic residues; it reads PKSKSPPKVKSPKRKKSPVRRRV. The 352-residue stretch at 156-507 folds into the Protein kinase domain; it reads FTNVKAVGKG…LANVLIHKIF (352 aa). ATP contacts are provided by residues 162–170 and Lys187; that span reads VGKGSFGTV. Asp302 functions as the Proton acceptor in the catalytic mechanism.

Belongs to the protein kinase superfamily. Ser/Thr protein kinase family.

It catalyses the reaction L-seryl-[protein] + ATP = O-phospho-L-seryl-[protein] + ADP + H(+). The catalysed reaction is L-threonyl-[protein] + ATP = O-phospho-L-threonyl-[protein] + ADP + H(+). In Invertebrate iridescent virus 6 (IIV-6), this protein is Probable serine/threonine-protein kinase 380R.